The following is a 193-amino-acid chain: DNA damage-inducible transcript 4-like protein (193 aa).

The protein belongs to the DDIT4 family. Up-regulated in atherosclerotic plaques relative to healthy segments of the same artery.

The protein localises to the cytoplasm. Its function is as follows. Inhibits cell growth by regulating the TOR signaling pathway upstream of the TSC1-TSC2 complex and downstream of AKT1. In Homo sapiens (Human), this protein is DNA damage-inducible transcript 4-like protein (DDIT4L).